The sequence spans 407 residues: Probable tRNA pseudouridine synthase D (407 aa).

The active-site Nucleophile is the aspartate 81. One can recognise a TRUD domain in the interval 151 to 372; that stretch reads GFPNYFGIQR…PGGRRELLIR (222 aa).

The protein belongs to the pseudouridine synthase TruD family.

It carries out the reaction uridine(13) in tRNA = pseudouridine(13) in tRNA. Functionally, could be responsible for synthesis of pseudouridine from uracil-13 in transfer RNAs. The sequence is that of Probable tRNA pseudouridine synthase D from Pyrococcus furiosus (strain ATCC 43587 / DSM 3638 / JCM 8422 / Vc1).